The chain runs to 290 residues: Ribosomal RNA small subunit methyltransferase A (290 aa).

6 residues coordinate S-adenosyl-L-methionine: Asn-27, Leu-29, Gly-54, Glu-75, Asp-100, and Asn-125.

It belongs to the class I-like SAM-binding methyltransferase superfamily. rRNA adenine N(6)-methyltransferase family. RsmA subfamily.

The protein resides in the cytoplasm. It catalyses the reaction adenosine(1518)/adenosine(1519) in 16S rRNA + 4 S-adenosyl-L-methionine = N(6)-dimethyladenosine(1518)/N(6)-dimethyladenosine(1519) in 16S rRNA + 4 S-adenosyl-L-homocysteine + 4 H(+). Specifically dimethylates two adjacent adenosines (A1518 and A1519) in the loop of a conserved hairpin near the 3'-end of 16S rRNA in the 30S particle. May play a critical role in biogenesis of 30S subunits. This Streptococcus pyogenes serotype M1 protein is Ribosomal RNA small subunit methyltransferase A.